A 562-amino-acid polypeptide reads, in one-letter code: MQTLDETSNLLPPPEEAEAPPLEQKFHEYNLALPKFPILFSLWLGSFLSSLDSTIVANIMNRVAEEFSESSKKQWIATSFLLTNTAFQPLYGKLSDITGRKSALLTAQFFFGLGCLLTCFARNVTEFSIARAICGIGAGGLNAISSIAVSDICTARERGVYQGYANIVFGFGQLLGAPLGGVFIETIGWRALFGIQVPVIMLCSVLAIKNINIKLFHVPPMKERYTLKNLSRIDIFGSLSLVATISGVLFLCSSQLNKLYLALFTIGSFIVFILVERYYATEKILPFELLTRSFCLSSAVTVISSFVVFGEIFRSPIYLQLLQNISVTKTGLFLIFPSISVAVGSLVTGWVLRNTKINLAHCAYQIIFGGMIMQLLGLGLGYFLLSHLNPDYTIYDMLESITFRSNSIWWKLIYVFASVLVSFGYACLLVATLVSIVFTVEKSQQGTMTGVFYLWRSIGNVLGASLTLVSYENSLSSMLWNYMFKTKRDDEYHFTKKQYYSLINDSSYLRGPNFPTDIFVRILDVYKKAFLISYIPNIALAAVGIVLSLYLVKHTYKRSSSS.

Residues 1 to 30 (MQTLDETSNLLPPPEEAEAPPLEQKFHEYN) lie on the Vacuolar side of the membrane. Residues 31–51 (LALPKFPILFSLWLGSFLSSL) form a helical membrane-spanning segment. Residues 52–100 (DSTIVANIMNRVAEEFSESSKKQWIATSFLLTNTAFQPLYGKLSDITGR) lie on the Cytoplasmic side of the membrane. Residues 101-121 (KSALLTAQFFFGLGCLLTCFA) form a helical membrane-spanning segment. The Vacuolar segment spans residues 122-131 (RNVTEFSIAR). Asparagine 123 carries N-linked (GlcNAc...) asparagine glycosylation. Residues 132–152 (AICGIGAGGLNAISSIAVSDI) form a helical membrane-spanning segment. At 153–166 (CTARERGVYQGYAN) the chain is on the cytoplasmic side. A helical transmembrane segment spans residues 167-187 (IVFGFGQLLGAPLGGVFIETI). The Vacuolar segment spans residues 188–190 (GWR). The helical transmembrane segment at 191 to 211 (ALFGIQVPVIMLCSVLAIKNI) threads the bilayer. Residues 212–232 (NIKLFHVPPMKERYTLKNLSR) lie on the Cytoplasmic side of the membrane. The chain crosses the membrane as a helical span at residues 233 to 253 (IDIFGSLSLVATISGVLFLCS). Residues 254–255 (SQ) lie on the Vacuolar side of the membrane. Residues 256–276 (LNKLYLALFTIGSFIVFILVE) form a helical membrane-spanning segment. The Cytoplasmic segment spans residues 277–292 (RYYATEKILPFELLTR). Residues 293–313 (SFCLSSAVTVISSFVVFGEIF) form a helical membrane-spanning segment. Residues 314-331 (RSPIYLQLLQNISVTKTG) lie on the Vacuolar side of the membrane. Asparagine 324 carries an N-linked (GlcNAc...) asparagine glycan. A helical transmembrane segment spans residues 332-352 (LFLIFPSISVAVGSLVTGWVL). Residues 353-365 (RNTKINLAHCAYQ) are Cytoplasmic-facing. Residues 366 to 386 (IIFGGMIMQLLGLGLGYFLLS) form a helical membrane-spanning segment. Over 387-419 (HLNPDYTIYDMLESITFRSNSIWWKLIYVFASV) the chain is Vacuolar. The helical transmembrane segment at 420-440 (LVSFGYACLLVATLVSIVFTV) threads the bilayer. Over 441 to 448 (EKSQQGTM) the chain is Cytoplasmic. A helical membrane pass occupies residues 449-469 (TGVFYLWRSIGNVLGASLTLV). At 470–528 (SYENSLSSMLWNYMFKTKRDDEYHFTKKQYYSLINDSSYLRGPNFPTDIFVRILDVYKK) the chain is on the vacuolar side. Residue asparagine 504 is glycosylated (N-linked (GlcNAc...) asparagine). A helical membrane pass occupies residues 529–549 (AFLISYIPNIALAAVGIVLSL). At 550 to 562 (YLVKHTYKRSSSS) the chain is on the cytoplasmic side.

The protein belongs to the major facilitator superfamily.

The protein resides in the vacuole membrane. Functionally, transporter required for vacuolar uptake of at least histidine and lysine. The sequence is that of Vacuolar basic amino acid transporter 1 (VBA1) from Saccharomyces cerevisiae (strain ATCC 204508 / S288c) (Baker's yeast).